The sequence spans 89 residues: Small ribosomal subunit protein uS15 (89 aa).

This sequence belongs to the universal ribosomal protein uS15 family. As to quaternary structure, part of the 30S ribosomal subunit. Forms a bridge to the 50S subunit in the 70S ribosome, contacting the 23S rRNA.

In terms of biological role, one of the primary rRNA binding proteins, it binds directly to 16S rRNA where it helps nucleate assembly of the platform of the 30S subunit by binding and bridging several RNA helices of the 16S rRNA. Forms an intersubunit bridge (bridge B4) with the 23S rRNA of the 50S subunit in the ribosome. The chain is Small ribosomal subunit protein uS15 from Baumannia cicadellinicola subsp. Homalodisca coagulata.